The sequence spans 134 residues: Profilin-2 (134 aa).

Residues Cys13 and Cys118 are joined by a disulfide bond. The Involved in PIP2 interaction signature appears at 84–100 (AVIRGKKGSGGITIKKT). At Thr114 the chain carries Phosphothreonine.

This sequence belongs to the profilin family. Occurs in many kinds of cells as a complex with monomeric actin in a 1:1 ratio. Post-translationally, phosphorylated by MAP kinases.

Its subcellular location is the cytoplasm. It localises to the cytoskeleton. Binds to actin and affects the structure of the cytoskeleton. At high concentrations, profilin prevents the polymerization of actin, whereas it enhances it at low concentrations. The polypeptide is Profilin-2 (Olea europaea (Common olive)).